Reading from the N-terminus, the 292-residue chain is Pyruvate formate-lyase 2-activating enzyme (292 aa).

Positions 33-287 (NDGEGIRTVV…REMAERAGLQ (255 aa)) constitute a Radical SAM core domain. Positions 47, 51, and 54 each coordinate [4Fe-4S] cluster. 53 to 55 (WCA) is an S-adenosyl-L-methionine binding site. Residues 62–96 (GKIQTVRREAKCLHCAKCLRDADECPSGAFERIGR) form the 4Fe-4S ferredoxin-type domain. S-adenosyl-L-methionine-binding positions include glycine 126, 175–177 (DLK), and histidine 247.

This sequence belongs to the organic radical-activating enzymes family. Requires [4Fe-4S] cluster as cofactor.

Its subcellular location is the cytoplasm. The catalysed reaction is glycyl-[formate C-acetyltransferase] + reduced [flavodoxin] + S-adenosyl-L-methionine = glycin-2-yl radical-[formate C-acetyltransferase] + semiquinone [flavodoxin] + 5'-deoxyadenosine + L-methionine + H(+). In terms of biological role, activation of pyruvate formate-lyase 2 under anaerobic conditions by generation of an organic free radical, using S-adenosylmethionine and reduced flavodoxin as cosubstrates to produce 5'-deoxy-adenosine. The polypeptide is Pyruvate formate-lyase 2-activating enzyme (pflC) (Escherichia coli (strain K12)).